Reading from the N-terminus, the 418-residue chain is Nucleoredoxin (418 aa).

The Thioredoxin domain occupies 109-309; sequence KYKVTSIPSL…ESNAVQLHEG (201 aa).

It belongs to the nucleoredoxin family.

It localises to the cytoplasm. It is found in the cytosol. The protein resides in the nucleus. It catalyses the reaction [protein]-dithiol + NAD(+) = [protein]-disulfide + NADH + H(+). It carries out the reaction [protein]-dithiol + NADP(+) = [protein]-disulfide + NADPH + H(+). In terms of biological role, functions as a redox-dependent negative regulator of the Wnt signaling pathway. This Danio rerio (Zebrafish) protein is Nucleoredoxin (nxn).